We begin with the raw amino-acid sequence, 645 residues long: Leucine-rich repeat protein soc-2 homolog (645 aa).

The span at 1-19 shows a compositional bias: low complexity; sequence MNLCSSGATASTTSLSSTG. Disordered regions lie at residues 1–67 and 83–151; these read MNLC…AGGS and NSPA…IQAD. Composition is skewed to gly residues over residues 26–49 and 88–97; these read GVPG…GGGS and GAGGASGSTG. Positions 98 to 107 are enriched in low complexity; it reads SGQQPTGSNG. LRR repeat units lie at residues 165-186, 188-209, 211-232, 234-255, 257-278, 280-301, 303-324, 326-347, 349-371, 372-393, 396-417, 420-441, 444-465, 467-488, 490-511, 513-534, 536-557, 559-580, 582-604, and 606-627; these read GIKR…VKEC, HLTE…IGCL, SLRN…LQNC, QLKV…IYRL, SLTT…LRQL, NLTM…IGAL, NLTT…IGNC, NLSA…IGNL, SLVR…KNCK, SMDE…MLAS, GLTT…GPAQ, NVYS…IFSR, GLTK…IGTW, NMVE…IMNL, NLEI…IGNL, RLRI…IGLL, ELQR…IGHL, NLTH…IGSL, SLEN…LALC, and NLKY…IQAG.

This sequence belongs to the SHOC2 family.

In terms of biological role, acts as a Ras effector and participates in MAPK pathway activation. Probably acts as a regulatory subunit of protein phosphatase that specifically dephosphorylates Raf kinase and stimulate Raf activity at specialized signaling complexes upon Ras activation. The polypeptide is Leucine-rich repeat protein soc-2 homolog (Sur-8) (Drosophila yakuba (Fruit fly)).